Consider the following 648-residue polypeptide: Threonine--tRNA ligase (648 aa).

Residues 1–61 (MIKITLPDGS…TTDGNLILYT (61 aa)) form the TGS domain. Residues 240 to 539 (DHRKLGKELE…LLEHTAGNFP (300 aa)) are catalytic. Residues cysteine 335, histidine 386, and histidine 516 each coordinate Zn(2+).

This sequence belongs to the class-II aminoacyl-tRNA synthetase family. In terms of assembly, homodimer. Zn(2+) is required as a cofactor.

Its subcellular location is the cytoplasm. The catalysed reaction is tRNA(Thr) + L-threonine + ATP = L-threonyl-tRNA(Thr) + AMP + diphosphate + H(+). Functionally, catalyzes the attachment of threonine to tRNA(Thr) in a two-step reaction: L-threonine is first activated by ATP to form Thr-AMP and then transferred to the acceptor end of tRNA(Thr). Also edits incorrectly charged L-seryl-tRNA(Thr). This is Threonine--tRNA ligase from Flavobacterium johnsoniae (strain ATCC 17061 / DSM 2064 / JCM 8514 / BCRC 14874 / CCUG 350202 / NBRC 14942 / NCIMB 11054 / UW101) (Cytophaga johnsonae).